We begin with the raw amino-acid sequence, 183 residues long: Photosystem I assembly protein Ycf4 (183 aa).

The next 2 helical transmembrane spans lie at 23–43 (WASV…SSYF) and 64–84 (VMSF…LTII).

It belongs to the Ycf4 family.

It is found in the plastid. It localises to the chloroplast thylakoid membrane. Seems to be required for the assembly of the photosystem I complex. The sequence is that of Photosystem I assembly protein Ycf4 from Stigeoclonium helveticum (Green alga).